A 135-amino-acid chain; its full sequence is Galectin-1 (135 aa).

The residue at position 2 (A2) is an N-acetylalanine. The region spanning 4–135 is the Galectin domain; that stretch reads GLVASNLNLK…DFKIKCVAFE (132 aa). Residues K13, K19, and K29 each carry the N6-acetyllysine modification. S30 is subject to Phosphoserine. A beta-D-galactoside contacts are provided by residues 45–49, H53, N62, and 69–72; these read HFNPR and WGTE. At K108 the chain carries N6-acetyllysine; alternate. An N6-succinyllysine; alternate modification is found at K108. Residue K128 is modified to N6-acetyllysine.

Binds LGALS3BP. Interacts with CD2, CD3, CD4, CD6, CD7, CD43, ALCAM and CD45. Interacts with laminin. Interacts with SUSD2. Exists in a reversible and active monomer-homodimer equilibrium, the mononomer/dimer state is regulated by lectin concentration. Interacts with cargo receptor TMED10; the interaction mediates the translocation from the cytoplasm into the ERGIC (endoplasmic reticulum-Golgi intermediate compartment) and thereby secretion.

Its subcellular location is the cytoplasm. The protein localises to the secreted. The protein resides in the extracellular space. It is found in the extracellular matrix. Lectin that binds beta-galactoside and a wide array of complex carbohydrates. Plays a role in regulating apoptosis, cell proliferation and cell differentiation. Inhibits CD45 protein phosphatase activity and therefore the dephosphorylation of Lyn kinase. Strong inducer of T-cell apoptosis. The sequence is that of Galectin-1 (LGALS1) from Cricetulus griseus (Chinese hamster).